The sequence spans 93 residues: Beta-defensin 128 (93 aa).

A signal peptide spans 1-18 (MKLFLVLIILLFEVLTDG). 3 disulfide bridges follow: C24/C52, C32/C46, and C36/C53.

This sequence belongs to the beta-defensin family.

The protein localises to the secreted. Has antibacterial activity. This Macaca fascicularis (Crab-eating macaque) protein is Beta-defensin 128 (DEFB128).